The chain runs to 435 residues: UPF0761 membrane protein mma_2179 (435 aa).

6 consecutive transmembrane segments (helical) span residues 45–65 (VLAL…FPLF), 103–123 (LSAF…LMID), 142–162 (ILVY…SMTF), 177–197 (VPFV…MVAF), 208–228 (LVEW…FEIV), and 252–272 (FPIF…GAVV).

This sequence belongs to the UPF0761 family.

The protein localises to the cell inner membrane. This chain is UPF0761 membrane protein mma_2179, found in Janthinobacterium sp. (strain Marseille) (Minibacterium massiliensis).